An 85-amino-acid chain; its full sequence is UPF0298 protein SUB0431 (85 aa).

It belongs to the UPF0298 family.

The protein resides in the cytoplasm. In Streptococcus uberis (strain ATCC BAA-854 / 0140J), this protein is UPF0298 protein SUB0431.